Reading from the N-terminus, the 384-residue chain is Monomeric sarcosine oxidase (384 aa).

6–36 (DVIVIGLGGMGSAAAHHLSARGARVLGLEKF) is an FAD binding site. Cys-315 bears the S-8alpha-FAD cysteine mark.

It belongs to the MSOX/MTOX family. MSOX subfamily. As to quaternary structure, monomer. FAD serves as cofactor.

The protein resides in the cytoplasm. It catalyses the reaction sarcosine + O2 + H2O = formaldehyde + glycine + H2O2. In terms of biological role, catalyzes the oxidative demethylation of sarcosine. This Streptomyces avermitilis (strain ATCC 31267 / DSM 46492 / JCM 5070 / NBRC 14893 / NCIMB 12804 / NRRL 8165 / MA-4680) protein is Monomeric sarcosine oxidase.